We begin with the raw amino-acid sequence, 473 residues long: Fumarate hydratase class II (473 aa).

Substrate-binding positions include 105 to 107 (SGT), 130 to 133 (HPND), 140 to 142 (SSN), and threonine 188. Catalysis depends on histidine 189, which acts as the Proton donor/acceptor. Serine 319 is a catalytic residue. Substrate contacts are provided by residues serine 320 and 325 to 327 (KVN).

The protein belongs to the class-II fumarase/aspartase family. Fumarase subfamily. In terms of assembly, homotetramer.

Its subcellular location is the cytoplasm. The catalysed reaction is (S)-malate = fumarate + H2O. The protein operates within carbohydrate metabolism; tricarboxylic acid cycle; (S)-malate from fumarate: step 1/1. Involved in the TCA cycle. Catalyzes the stereospecific interconversion of fumarate to L-malate. The sequence is that of Fumarate hydratase class II from Xylella fastidiosa (strain Temecula1 / ATCC 700964).